The chain runs to 379 residues: uncharacterized protein (379 aa).

29 to 36 (GPLNSGKT) is an ATP binding site.

This sequence belongs to the archaeal ATPase family.

This is an uncharacterized protein from Methanocaldococcus jannaschii (strain ATCC 43067 / DSM 2661 / JAL-1 / JCM 10045 / NBRC 100440) (Methanococcus jannaschii).